The primary structure comprises 111 residues: Large ribosomal subunit protein uL22 (111 aa).

This sequence belongs to the universal ribosomal protein uL22 family. Part of the 50S ribosomal subunit.

Its function is as follows. This protein binds specifically to 23S rRNA; its binding is stimulated by other ribosomal proteins, e.g. L4, L17, and L20. It is important during the early stages of 50S assembly. It makes multiple contacts with different domains of the 23S rRNA in the assembled 50S subunit and ribosome. Functionally, the globular domain of the protein is located near the polypeptide exit tunnel on the outside of the subunit, while an extended beta-hairpin is found that lines the wall of the exit tunnel in the center of the 70S ribosome. In Fusobacterium nucleatum subsp. nucleatum (strain ATCC 25586 / DSM 15643 / BCRC 10681 / CIP 101130 / JCM 8532 / KCTC 2640 / LMG 13131 / VPI 4355), this protein is Large ribosomal subunit protein uL22.